We begin with the raw amino-acid sequence, 723 residues long: METAMCVCCPCCTWQRCCPQLCSCLCCKFIFTSERNCTCFPCPYKDERNCQFCHCTCSESPNCHWCCCSWANDPNCKCCCTASSNLNCYYYESRCCRNTIITFHKGRLRSIHTSSKTALRTGSSDTQVDEVKSIPANSHLVNHLNCPMCSRLRLHSFMLPCNHSLCEKCLRQLQKHAEVTENFFILICPVCDRSHCMPYSNKMQLPENYLHGRLTKRYMQEHGYLKWRFDRSSGPILCQVCRNKRIAYKRCITCRLNLCNDCLKAFHSDVAMQDHVFVDTSAEEQDEKICIHHPSSRIIEYCRNDNKLLCTFCKFSFHNGHDTISLIDACSERAASLFSAIAKFKAVRYEIDNDLMEFNILKNSFKADKEAKRKEIRNGFLKLRSILQEKEKIIMEQIENLEVSRQKEIEKYVYVTTMKVNEMDGLIAYSKEALKETGQVAFLQSAKILVDQIEDGIQTTYRPDPQLRLHSINYVPLDFVELSSAIHELFPTGPKKVRSSGDSLPSPYPVHSETMIARKVTFSTHSLGNQHIYQRSSSMLSFSNTDKKAKVGLEACGRAQSATPAKPTDGLYTYWSAGADSQSVQNSSSFHNWYSFNDGSVKTPGPIVIYQTLVYPRAAKVYWTCPAEDVDSFEMEFYEVITSPPNNVQMELCGQIRDIMQQNLELHNLTPNTEYVFKVRAINDNGPGQWSDICKVVTPDGHGKNRAKWGLLKNIQSALQKHF.

The RING-type zinc finger occupies 146-192 (CPMCSRLRLHSFMLPCNHSLCEKCLRQLQKHAEVTENFFILICPVCD). 2 B box-type zinc fingers span residues 235–280 (PILC…FVDT) and 285–326 (QDEK…TISL). 4 residues coordinate Zn(2+): cysteine 290, histidine 293, cysteine 313, and histidine 318. Residues 382-407 (KLRSILQEKEKIIMEQIENLEVSRQK) are a coiled coil. The 59-residue stretch at 434–492 (LKETGQVAFLQSAKILVDQIEDGIQTTYRPDPQLRLHSINYVPLDFVELSSAIHELFPT) folds into the COS domain. The Fibronectin type-III domain maps to 603 to 701 (TPGPIVIYQT…DICKVVTPDG (99 aa)).

It belongs to the TRIM/RBCC family.

The protein is Tripartite motif-containing protein 42 (TRIM42) of Homo sapiens (Human).